Here is a 97-residue protein sequence, read N- to C-terminus: Large ribosomal subunit protein bL27 (97 aa).

Polar residues predominate over residues 1 to 10 (MVKLNLSNLQ). Positions 1–12 (MVKLNLSNLQHF) are excised as a propeptide. The tract at residues 1–38 (MVKLNLSNLQHFAHKKGGGSTSNGRDSQAKRLGAKAAD) is disordered.

Belongs to the bacterial ribosomal protein bL27 family. In terms of processing, the N-terminus is cleaved by ribosomal processing cysteine protease Prp.

The chain is Large ribosomal subunit protein bL27 from Streptococcus equi subsp. zooepidemicus (strain H70).